The sequence spans 512 residues: Centrosomal protein CCDC61 (512 aa).

An N-acetylmethionine modification is found at Met-1. The interval Met-1 to Pro-143 is head domain. 2 coiled-coil regions span residues Ile-178 to Glu-205 and Cys-248 to Glu-275. A disordered region spans residues Leu-276–Val-477. A Phosphothreonine modification is found at Thr-285. Residues Thr-293–Ala-306 show a composition bias toward basic and acidic residues. Ser-334, Ser-336, Ser-373, and Ser-376 each carry phosphoserine. The span at Arg-407–Ser-425 shows a compositional bias: low complexity. 2 positions are modified to phosphoserine: Ser-447 and Ser-473.

It belongs to the CCDC61 family. In terms of assembly, forms homodimers (via head domain). Interacts with CEP170. Interacts with PCM1 and CEP131. Binds tubulin.

Its subcellular location is the cytoplasm. The protein localises to the cytoskeleton. It localises to the microtubule organizing center. It is found in the centrosome. The protein resides in the centriolar satellite. Its subcellular location is the cilium basal body. Microtubule-binding centrosomal protein required for centriole cohesion, independently of the centrosome-associated protein/CEP250 and rootletin/CROCC linker. In interphase, required for anchoring microtubule at the mother centriole subdistal appendages and for centrosome positioning. During mitosis, may be involved in spindle assembly and chromatin alignment by regulating the organization of spindle microtubules into a symmetrical structure. Has been proposed to play a role in CEP170 recruitment to centrosomes. However, this function could not be confirmed. Plays a non-essential role in ciliogenesis. The polypeptide is Centrosomal protein CCDC61 (Homo sapiens (Human)).